Consider the following 179-residue polypeptide: Crossover junction endodeoxyribonuclease RuvC (179 aa).

Active-site residues include aspartate 7 and glutamate 67. Mn(2+)-binding residues include aspartate 7 and glutamate 67. The DNA-binding loop motif lies at 68-74 (DQILRRQ). Residues histidine 139 and aspartate 142 contribute to the active site. Histidine 139 lines the Mn(2+) pocket.

The protein belongs to the RuvC family. Homodimer which binds Holliday junction (HJ) DNA. The HJ becomes 2-fold symmetrical on binding to RuvC with unstacked arms; it has a different conformation from HJ DNA in complex with RuvA. In the full resolvosome a probable DNA-RuvA(4)-RuvB(12)-RuvC(2) complex forms which resolves the HJ. It depends on Mn(2+) as a cofactor.

The protein localises to the cytoplasm. It catalyses the reaction Endonucleolytic cleavage at a junction such as a reciprocal single-stranded crossover between two homologous DNA duplexes (Holliday junction).. The RuvA-RuvB-RuvC complex processes Holliday junction (HJ) DNA during genetic recombination and DNA repair. Endonuclease that resolves HJ intermediates. Cleaves cruciform DNA by making single-stranded nicks across the HJ at symmetrical positions within the homologous arms, probably yielding a 5'-phosphate and a 3'-hydroxyl group; requires a central core of homology in the junction. The consensus cleavage sequence is 5'-(G/C)TC(C/G)-3' (a different site than E.coli); cleavage occurs on the 3'-side of the TC dinucleotide at the point of strand exchange. Also resolves nicked HJ intermediates, replication forks and Y-junction DNA in vitro. HJ branch migration catalyzed by RuvA-RuvB allows RuvC to scan DNA until it finds its consensus sequence, where it cleaves and resolves the cruciform DNA. In terms of biological role, binds HJ DNA independently of homologous core or consensus sequence; Mn(2+) is not essential for binding but improves it, while &gt;1.0 mM Mg(2+) inhibit binding. Also binds Y-junction DNA less well. Requires a homologous core to cleave DNA. Another study shows divalent cations (Mn(2+), Mg(2+) and Ca(2+), tested up to 5.0 mM) improve DNA binding considerably over binding in their absence. The polypeptide is Crossover junction endodeoxyribonuclease RuvC (Deinococcus radiodurans (strain ATCC 13939 / DSM 20539 / JCM 16871 / CCUG 27074 / LMG 4051 / NBRC 15346 / NCIMB 9279 / VKM B-1422 / R1)).